A 243-amino-acid polypeptide reads, in one-letter code: MAGHSKWANIKHKKEKTDAQKGKLFTKLGRELMVVAKMYGPDPETNPKLRDVIAKAKANNMPMDKIMGFIKRAAGEIDTTGYEDITYEGYGPGGVAVIVEAMTNNRNRTAGELRHIFDKNGGNLGQTGCVSWMFSRKGVIVIEKESFPDEDFVMEKALEYGAEDFTSENGIYEIITSPEDFSKVREGLEKEGFTFIRAQIEMIPQTYVKLSSEDAQKMRRLIDMLEDNDDVKEVYHNWEEDEE.

Belongs to the TACO1 family.

The protein localises to the cytoplasm. This is Probable transcriptional regulatory protein Athe_0816 from Caldicellulosiruptor bescii (strain ATCC BAA-1888 / DSM 6725 / KCTC 15123 / Z-1320) (Anaerocellum thermophilum).